The sequence spans 231 residues: 2-phospho-L-lactate guanylyltransferase (231 aa).

Belongs to the CofC family. Homodimer.

It catalyses the reaction (2S)-2-phospholactate + GTP + H(+) = (2S)-lactyl-2-diphospho-5'-guanosine + diphosphate. It participates in cofactor biosynthesis; coenzyme F420 biosynthesis. In terms of biological role, guanylyltransferase that catalyzes the activation of (2S)-2-phospholactate (2-PL) as (2S)-lactyl-2-diphospho-5'-guanosine, via the condensation of 2-PL with GTP. It is involved in the biosynthesis of coenzyme F420, a hydride carrier cofactor. This is 2-phospho-L-lactate guanylyltransferase from Haloterrigena turkmenica (strain ATCC 51198 / DSM 5511 / JCM 9101 / NCIMB 13204 / VKM B-1734 / 4k) (Halococcus turkmenicus).